A 424-amino-acid chain; its full sequence is MFLLPRFVLVSCIIGSLGFDNPPTNVVSHLNGDWFLFGDSRSDCNHVVTTNPRNYSYMDLNPALCGSGKISSKAGNSIFRSFHFTDFYNYTGEGQQIIFYEGVNFTPYHAFKCTTSGSNDIWMQNKGLFYTQVYKNMAVYRSLTFVNVPYVYNGSAQSTALCKSGSLVLNNPAYIAREANFGDYYYKVEADFYLSGCDEYIVPLCIFNGKFLSNTKYYDDSQYYFNKDTGVIYGLNSTETITTGFDFNCHYLVLPSGNYLAISNELLLTVPTKAICLNKRKDFTPVQVVDSRWNNARQSDNMTAVACQPPYCYFRNSTTNYVGVYDINHGDAGFTSILSGLLYDSPCFSQQGVFRYDNVSSVWPLYPYGRCPTAADINTPDVPICVYDPLPIILLGILLSVAVIIIVVLLLYFMVDNGTRLHDA.

Residues 1–16 (MFLLPRFVLVSCIIGS) form the signal peptide. The esterase domain 1 stretch occupies residues 7–127 (FVLVSCIIGS…SNDIWMQNKG (121 aa)). Residues 17 to 392 (LGFDNPPTNV…PICVYDPLPI (376 aa)) lie on the Virion surface side of the membrane. Ser-40 acts as the Nucleophile in catalysis. An intrachain disulfide couples Cys-44 to Cys-65. N-linked (GlcNAc...) asparagine; by host glycosylation is found at Asn-54, Asn-89, Asn-153, Asn-236, and Asn-301. Intrachain disulfides connect Cys-113–Cys-162, Cys-197–Cys-276, and Cys-205–Cys-249. The interval 128-266 (LFYTQVYKNM…GNYLAISNEL (139 aa)) is receptor binding. The esterase domain 2 stretch occupies residues 267–379 (LLTVPTKAIC…RCPTAADINT (113 aa)). Residues Cys-307 and Cys-312 are joined by a disulfide bond. Asn-316 carries N-linked (GlcNAc...) asparagine; by host glycosylation. Catalysis depends on charge relay system residues Asp-326 and His-329. Cys-347 and Cys-371 are disulfide-bonded. The N-linked (GlcNAc...) asparagine; by host glycan is linked to Asn-358. Residues 393 to 413 (ILLGILLSVAVIIIVVLLLYF) form a helical membrane-spanning segment. The Intravirion portion of the chain corresponds to 414–424 (MVDNGTRLHDA). Asn-417 carries N-linked (GlcNAc...) asparagine; by host glycosylation.

It belongs to the influenza type C/coronaviruses hemagglutinin-esterase family. As to quaternary structure, homodimer; disulfide-linked. Forms a complex with the M protein in the pre-Golgi. Associates then with S-M complex to form a ternary complex S-M-HE. N-glycosylated in the host RER.

The protein localises to the virion membrane. The protein resides in the host cell membrane. The enzyme catalyses N-acetyl-9-O-acetylneuraminate + H2O = N-acetylneuraminate + acetate + H(+). The catalysed reaction is N-acetyl-4-O-acetylneuraminate + H2O = N-acetylneuraminate + acetate + H(+). Its function is as follows. Structural protein that makes short spikes at the surface of the virus. Contains receptor binding and receptor-destroying activities. Mediates de-O-acetylation of N-acetyl-4-O-acetylneuraminic acid, which is probably the receptor determinant recognized by the virus on the surface of erythrocytes and susceptible cells. This receptor-destroying activity is important for virus release as it probably helps preventing self-aggregation and ensures the efficient spread of the progeny virus from cell to cell. May serve as a secondary viral attachment protein for initiating infection, the spike protein being the major one. May become a target for both the humoral and the cellular branches of the immune system. The chain is Hemagglutinin-esterase from Bos taurus (Bovine).